A 457-amino-acid polypeptide reads, in one-letter code: Equilibrative nucleoside transporter 1 (457 aa).

Over 1-12 (MTTSHQPQDRYK) the chain is Cytoplasmic. Residues 13 to 29 (AVWLIFFVLGLGTLLPW) form a helical membrane-spanning segment. Topologically, residues 30–82 (NFFITATQYFTSRLNTSQNISLVTNQSCESTEALADPSVSLPARSSLSAIFNN) are extracellular. N-linked (GlcNAc...) asparagine glycosylation is found at Asn44, Asn48, and Asn54. Residues 83 to 107 (VMTLCAMLPLLIFTCLNSFLHQKVS) traverse the membrane as a helical segment. Over 108–111 (QSLR) the chain is Cytoplasmic. Residues 112-130 (ILGSLLAILLVFLVTATLV) form a helical membrane-spanning segment. The Extracellular segment spans residues 131-138 (KVQMDALS). A helical transmembrane segment spans residues 139–157 (FFIITMIKIVLINSFGAIL). Topologically, residues 158 to 174 (QASLFGLAGVLPANYTA) are cytoplasmic. The helical transmembrane segment at 175–199 (PIMSGQGLAGFFTSVAMICAVASGS) threads the bilayer. Topologically, residues 200–206 (KLSESAF) are extracellular. A helical membrane pass occupies residues 207 to 227 (GYFITACAVVILAILCYLALP). Residues 228 to 291 (WMEFYRHYLQ…IKAILKSIWV (64 aa)) are Cytoplasmic-facing. The residue at position 254 (Ser254) is a Phosphoserine. Residues 255 to 266 (EGEEPRGGREES) are compositionally biased toward basic and acidic residues. Residues 255–275 (EGEEPRGGREESGVPGPNSLP) form a disordered region. Ser273 is subject to Phosphoserine. Residues 292–311 (LALSVCFIFTVTIGLFPAVT) form a helical membrane-spanning segment. The Extracellular portion of the chain corresponds to 312–323 (AEVESSIAGTSP). The helical transmembrane segment at 324 to 343 (WKNCYFIPVACFLNFNVFDW) threads the bilayer. Residues 344 to 360 (LGRSLTAICMWPGQDSR) are Cytoplasmic-facing. Residues 361–379 (WLPVLVACRVVFIPLLMLC) traverse the membrane as a helical segment. Over 380 to 394 (NVKQHHYLPSLFKHD) the chain is Extracellular. A helical transmembrane segment spans residues 395–414 (VWFITFMAAFAFSNGYLASL). Residues 415–432 (CMCFGPKKVKPAEAETAG) lie on the Cytoplasmic side of the membrane. The chain crosses the membrane as a helical span at residues 433 to 453 (NIMSFFLCLGLALGAVLSFLL). Topologically, residues 454 to 457 (RALV) are extracellular.

Belongs to the SLC29A/ENT transporter (TC 2.A.57) family. As to quaternary structure, identified in a complex with STOM. In terms of tissue distribution, expressed in jejunum, liver and lung. Expressed in testis at the blood-testis barrier (at protein level). Expressed in ventricular myocytes (at protein level). Expressed in kidney.

Its subcellular location is the basolateral cell membrane. It is found in the apical cell membrane. The protein resides in the cell membrane. The enzyme catalyses adenosine(in) = adenosine(out). It carries out the reaction guanosine(in) = guanosine(out). It catalyses the reaction inosine(in) = inosine(out). The catalysed reaction is uridine(out) = uridine(in). The enzyme catalyses thymidine(in) = thymidine(out). It carries out the reaction cytidine(in) = cytidine(out). It catalyses the reaction adenine(out) = adenine(in). The catalysed reaction is guanine(out) = guanine(in). The enzyme catalyses thymine(out) = thymine(in). It carries out the reaction uracil(in) = uracil(out). It catalyses the reaction hypoxanthine(out) = hypoxanthine(in). Its activity is regulated as follows. Transport activity is sensitive to low concentrations of the inhibitor nitrobenzylmercaptopurine riboside (NBMPR). Its function is as follows. Uniporter involved in the facilitative transport of nucleosides and nucleobases, and contributes to maintaining their cellular homeostasis. Functions as a Na(+)-independent transporter. Involved in the transport of nucleosides such as adenosine, thymidine and uridine. Also transports purine nucleobases (hypoxanthine, adenine, guanine) and pyrimidine nucleobases (thymine, uracil). Mediates basolateral nucleoside uptake into Sertoli cells, thereby regulating the transport of nucleosides in testis across the blood-testis barrier. Regulates inosine levels in brown adipocytes tissues (BAT) and extracellular inosine levels, which controls BAT-dependent energy expenditure. The sequence is that of Equilibrative nucleoside transporter 1 from Rattus norvegicus (Rat).